A 38-amino-acid chain; its full sequence is Antimicrobial peptide 1 (38 aa).

Disulfide bonds. As to expression, expressed in flowers but not in leaves, seeds or roots (at protein level).

Antimicrobial peptide. Active against fungal species B.cinerea (IC(50)=5.8 uM) and A.niger (IC(50)=5.6 uM) but not against F.oxysporum, F.graminearum, B.sorokinina and P.debaryanum at concentrations below 10 uM. Active against bacterial species P.syringae, B.subtilis and X.campestris. In Taraxacum officinale (Common dandelion), this protein is Antimicrobial peptide 1.